Consider the following 314-residue polypeptide: MSFQFSLTIMLYFQMVIMAGTVMLAYYFEYTDTFTVNVQGFFCYDSSYTKPYPGPDESSDIPPVLLLSLVTGVPVLVIIVGETVVFCLQVATRDFENQEKTLLTGDCCYINPLVRRTVRFLGIYTFGLFATDIFVNAGQVVTGNLAPHFLTVCKPNYTALGCRQFTQFITDANACTGIPDLVIKARRTFPSKDAALSVYAALYLAMYITSTIKAKGTRLAKPVLCLGLMCLAFLTGINRVAEYRNHWSDVIAGFLIGISIAVFLVVCVVNNFKGRRTEHEHWPTENLAQMPIISIPRVENPLEKNHLTAFAEVT.

6 helical membrane passes run 5–25 (FSLTIMLYFQMVIMAGTVMLA), 61–81 (IPPVLLLSLVTGVPVLVIIVG), 120–140 (FLGIYTFGLFATDIFVNAGQV), 194–214 (AALSVYAALYLAMYITSTIKA), 223–243 (VLCLGLMCLAFLTGINRVAEY), and 250–270 (VIAGFLIGISIAVFLVVCVVN).

This sequence belongs to the PA-phosphatase related phosphoesterase family.

The protein resides in the cell membrane. In terms of biological role, induces filopodia formation and promotes neurite growth. The chain is Phospholipid phosphatase-related protein type 5 from Xenopus laevis (African clawed frog).